We begin with the raw amino-acid sequence, 202 residues long: Urease accessory protein UreG (202 aa).

11–18 (GPVGSGKT) is a binding site for GTP.

Belongs to the SIMIBI class G3E GTPase family. UreG subfamily. In terms of assembly, homodimer. UreD, UreF and UreG form a complex that acts as a GTP-hydrolysis-dependent molecular chaperone, activating the urease apoprotein by helping to assemble the nickel containing metallocenter of UreC. The UreE protein probably delivers the nickel.

Its subcellular location is the cytoplasm. In terms of biological role, facilitates the functional incorporation of the urease nickel metallocenter. This process requires GTP hydrolysis, probably effectuated by UreG. The protein is Urease accessory protein UreG of Prochlorococcus marinus (strain MIT 9313).